The chain runs to 695 residues: DNA ligase (695 aa).

NAD(+)-binding positions include 44–48 (DAEYD), 93–94 (SL), and E123. K125 serves as the catalytic N6-AMP-lysine intermediate. Residues R146, E184, K300, and K324 each contribute to the NAD(+) site. Zn(2+) contacts are provided by C418, C421, C436, and C442. The BRCT domain occupies 605-694 (SAAKPLAGIT…PDAARSMAQR (90 aa)).

Belongs to the NAD-dependent DNA ligase family. LigA subfamily. Requires Mg(2+) as cofactor. It depends on Mn(2+) as a cofactor.

It catalyses the reaction NAD(+) + (deoxyribonucleotide)n-3'-hydroxyl + 5'-phospho-(deoxyribonucleotide)m = (deoxyribonucleotide)n+m + AMP + beta-nicotinamide D-nucleotide.. DNA ligase that catalyzes the formation of phosphodiester linkages between 5'-phosphoryl and 3'-hydroxyl groups in double-stranded DNA using NAD as a coenzyme and as the energy source for the reaction. It is essential for DNA replication and repair of damaged DNA. The chain is DNA ligase from Acidothermus cellulolyticus (strain ATCC 43068 / DSM 8971 / 11B).